The primary structure comprises 252 residues: Pimeloyl-[acyl-carrier protein] methyl ester esterase (252 aa).

Residues Leu15 to Leu239 form the AB hydrolase-1 domain. Substrate is bound by residues Trp21, Ser81–Leu82, and Phe143–Gln147. Residue Ser81 is the Nucleophile of the active site. Residues Asp207 and His235 contribute to the active site. His235 provides a ligand contact to substrate.

Belongs to the AB hydrolase superfamily. Carboxylesterase BioH family. In terms of assembly, monomer.

The protein resides in the cytoplasm. The catalysed reaction is 6-carboxyhexanoyl-[ACP] methyl ester + H2O = 6-carboxyhexanoyl-[ACP] + methanol + H(+). It participates in cofactor biosynthesis; biotin biosynthesis. In terms of biological role, the physiological role of BioH is to remove the methyl group introduced by BioC when the pimeloyl moiety is complete. It allows to synthesize pimeloyl-ACP via the fatty acid synthetic pathway through the hydrolysis of the ester bonds of pimeloyl-ACP esters. This is Pimeloyl-[acyl-carrier protein] methyl ester esterase from Nitrosomonas europaea (strain ATCC 19718 / CIP 103999 / KCTC 2705 / NBRC 14298).